A 294-amino-acid polypeptide reads, in one-letter code: MVRSYIPLNSLRAFEAAARQLSFTKAAIELNVTHAAISQQVKALEQRLNCRLFIRISRGLVLTTEGENLLPILNDSFDRIADTLDRFSTGIIREKVRVGVVGTFATGYLLSRLRDFQQHSPHVDILLSTHNNRVDVVAEGLDYAIRYGNGALAWHESHFMYAPPLAQLCAPSISKRFTPPTDLQRFMLLGSYRAMNWSAWFAAAGGSVPSPSQQIMMFDSSVSMLEAAQAEIGIALAPPAMFMHLLRSERIIQPFSTTVSLGGYWLTRLQSRTETPAMRDFALWLLSEMKSEGE.

Positions 6 to 63 (IPLNSLRAFEAAARQLSFTKAAIELNVTHAAISQQVKALEQRLNCRLFIRISRGLVLT) constitute an HTH lysR-type domain. A DNA-binding region (H-T-H motif) is located at residues 23 to 42 (FTKAAIELNVTHAAISQQVK).

The protein belongs to the LysR transcriptional regulatory family.

It localises to the cytoplasm. In terms of biological role, this protein is a positive regulator of gene expression of beta-lactamase (AmpC). The polypeptide is HTH-type transcriptional activator AmpR (ampR) (Yersinia enterocolitica).